The primary structure comprises 481 residues: Glutamyl-tRNA(Gln) amidotransferase subunit A (481 aa).

Active-site charge relay system residues include K76 and S151. S175 acts as the Acyl-ester intermediate in catalysis.

It belongs to the amidase family. GatA subfamily. Heterotrimer of A, B and C subunits.

It carries out the reaction L-glutamyl-tRNA(Gln) + L-glutamine + ATP + H2O = L-glutaminyl-tRNA(Gln) + L-glutamate + ADP + phosphate + H(+). Allows the formation of correctly charged Gln-tRNA(Gln) through the transamidation of misacylated Glu-tRNA(Gln) in organisms which lack glutaminyl-tRNA synthetase. The reaction takes place in the presence of glutamine and ATP through an activated gamma-phospho-Glu-tRNA(Gln). This Neisseria meningitidis serogroup B (strain ATCC BAA-335 / MC58) protein is Glutamyl-tRNA(Gln) amidotransferase subunit A.